The sequence spans 340 residues: Phenylalanine--tRNA ligase alpha subunit (340 aa).

Residue Glu-254 participates in Mg(2+) binding.

This sequence belongs to the class-II aminoacyl-tRNA synthetase family. Phe-tRNA synthetase alpha subunit type 1 subfamily. Tetramer of two alpha and two beta subunits. The cofactor is Mg(2+).

It is found in the cytoplasm. The enzyme catalyses tRNA(Phe) + L-phenylalanine + ATP = L-phenylalanyl-tRNA(Phe) + AMP + diphosphate + H(+). The polypeptide is Phenylalanine--tRNA ligase alpha subunit (Acidithiobacillus ferrooxidans (strain ATCC 23270 / DSM 14882 / CIP 104768 / NCIMB 8455) (Ferrobacillus ferrooxidans (strain ATCC 23270))).